A 198-amino-acid polypeptide reads, in one-letter code: MSKVLILKSSILGGYSQSAVLIDHLASHWETQGAAITVRDLGGKDVLPMVDGEIASGLRGGAELSARQQEMLALSDTLVAELKANDTIVIAAPMYNFTIPAQLKNWIDFIARAGVTFTYTETGPKGLVEGKRAVLVTTRGGAHKDGPTDHVVPYLKTVLGFIGITNVEVVYAEALNMGPEAHDKGMSEAKHSIDQLKA.

Residues S10, 16 to 18, 94 to 97, and 138 to 141 contribute to the FMN site; these read SQS, MYNF, and TRGG.

It belongs to the azoreductase type 1 family. As to quaternary structure, homodimer. FMN is required as a cofactor.

The enzyme catalyses 2 a quinone + NADH + H(+) = 2 a 1,4-benzosemiquinone + NAD(+). The catalysed reaction is N,N-dimethyl-1,4-phenylenediamine + anthranilate + 2 NAD(+) = 2-(4-dimethylaminophenyl)diazenylbenzoate + 2 NADH + 2 H(+). Quinone reductase that provides resistance to thiol-specific stress caused by electrophilic quinones. In terms of biological role, also exhibits azoreductase activity. Catalyzes the reductive cleavage of the azo bond in aromatic azo compounds to the corresponding amines. This Shewanella baltica (strain OS195) protein is FMN-dependent NADH:quinone oxidoreductase.